Reading from the N-terminus, the 463-residue chain is Elongation factor 1-alpha (463 aa).

Residue Gly-2 is modified to N,N,N-trimethylglycine. Position 3 is an N6,N6-dimethyllysine; alternate (Lys-3). Lys-3 is subject to N6-methyllysine; alternate. Positions 5–239 constitute a tr-type G domain; the sequence is KNHVNVVVIG…DAIEPPSRPT (235 aa). Positions 14–21 are G1; it reads GHVDSGKS. 14–21 lines the GTP pocket; it reads GHVDSGKS. Lys-30 bears the N6-methyllysine mark. The interval 70 to 74 is G2; the sequence is GITID. Position 79 is an N6,N6,N6-trimethyllysine (Lys-79). Residues 91 to 94 are G3; it reads DAPG. Residues 91–95 and 153–156 contribute to the GTP site; these read DAPGH and NKMD. The segment at 153–156 is G4; it reads NKMD. Residues 191–193 are G5; the sequence is SGW. N6,N6-dimethyllysine; alternate is present on Lys-315. Residue Lys-315 is modified to N6-methyllysine; alternate. The residue at position 389 (Lys-389) is an N6-methyllysine.

It belongs to the TRAFAC class translation factor GTPase superfamily. Classic translation factor GTPase family. EF-Tu/EF-1A subfamily.

It is found in the cytoplasm. This protein promotes the GTP-dependent binding of aminoacyl-tRNA to the A-site of ribosomes during protein biosynthesis. In Puccinia graminis (Black stem rust fungus), this protein is Elongation factor 1-alpha (TEF).